The primary structure comprises 207 residues: Large ribosomal subunit protein bL20 (207 aa).

The interval 117–161 is disordered; it reads QETQPQPEEKTSLQPEKVLSTELSEEKSDDTLETKPQTTQVKAKK. Basic and acidic residues predominate over residues 140–149; that stretch reads SEEKSDDTLE.

Belongs to the bacterial ribosomal protein bL20 family.

Functionally, binds directly to 23S ribosomal RNA and is necessary for the in vitro assembly process of the 50S ribosomal subunit. It is not involved in the protein synthesizing functions of that subunit. This Onion yellows phytoplasma (strain OY-M) protein is Large ribosomal subunit protein bL20.